A 380-amino-acid polypeptide reads, in one-letter code: Alkanesulfonate monooxygenase (380 aa).

The protein belongs to the SsuD family. As to quaternary structure, homotetramer.

It catalyses the reaction an alkanesulfonate + FMNH2 + O2 = an aldehyde + FMN + sulfite + H2O + 2 H(+). Its function is as follows. Catalyzes the desulfonation of aliphatic sulfonates. In Pectobacterium atrosepticum (strain SCRI 1043 / ATCC BAA-672) (Erwinia carotovora subsp. atroseptica), this protein is Alkanesulfonate monooxygenase.